A 443-amino-acid chain; its full sequence is Tol-Pal system protein TolB (443 aa).

The N-terminal stretch at 1-33 is a signal peptide; the sequence is MKIGIINTKIRTVFSAFACMIAASLVCTMPARA.

This sequence belongs to the TolB family. The Tol-Pal system is composed of five core proteins: the inner membrane proteins TolA, TolQ and TolR, the periplasmic protein TolB and the outer membrane protein Pal. They form a network linking the inner and outer membranes and the peptidoglycan layer.

It is found in the periplasm. Functionally, part of the Tol-Pal system, which plays a role in outer membrane invagination during cell division and is important for maintaining outer membrane integrity. The polypeptide is Tol-Pal system protein TolB (Brucella suis (strain ATCC 23445 / NCTC 10510)).